The primary structure comprises 227 residues: Pectinesterase inhibitor 28 (227 aa).

Residues 1-25 form the signal peptide; that stretch reads MASSMAPAAAMAILLLALLMPATLC. The interval 28 to 50 is disordered; sequence SGPPSSKHGHGGHAKRAPPPASP. The segment covering 34–43 has biased composition (basic residues); sequence KHGHGGHAKR. An intrachain disulfide couples cysteine 66 to cysteine 75. N-linked (GlcNAc...) asparagine glycosylation is found at asparagine 67, asparagine 104, and asparagine 117. The cysteines at positions 139 and 179 are disulfide-linked.

It belongs to the PMEI family. Expressed in roots, leaves, culms and flag leaves.

It localises to the secreted. The protein localises to the extracellular space. Its subcellular location is the apoplast. Functionally, pectin methylesterase (PME) inhibitor that inhibits PME in vitro. Functions as a critical structural modulator by regulating the degree of pectin methylesterification and the physiochemical properties of the cell wall components. This is Pectinesterase inhibitor 28 from Oryza sativa subsp. japonica (Rice).